Here is a 296-residue protein sequence, read N- to C-terminus: 2-methylisocitrate lyase (296 aa).

Ser-45–Gly-47 is a substrate binding site. The Mg(2+) site is built by Asp-85 and Asp-87. Substrate is bound by residues Cys-123 to Gly-124, Arg-158, Glu-188, Asn-210 to Thr-212, Arg-241, and Arg-270.

This sequence belongs to the isocitrate lyase/PEP mutase superfamily. Methylisocitrate lyase family. As to quaternary structure, homotetramer; dimer of dimers. Mg(2+) is required as a cofactor.

The catalysed reaction is (2S,3R)-3-hydroxybutane-1,2,3-tricarboxylate = pyruvate + succinate. The protein operates within organic acid metabolism; propanoate degradation. Functionally, involved in the catabolism of short chain fatty acids (SCFA) via the 2-methylcitrate cycle I (propionate degradation route). Catalyzes the thermodynamically favored C-C bond cleavage of (2R,3S)-2-methylisocitrate to yield pyruvate and succinate via an alpha-carboxy-carbanion intermediate. The polypeptide is 2-methylisocitrate lyase (Escherichia coli (strain K12)).